The chain runs to 100 residues: Large ribosomal subunit protein uL23 (100 aa).

It belongs to the universal ribosomal protein uL23 family. In terms of assembly, part of the 50S ribosomal subunit. Contacts protein L29, and trigger factor when it is bound to the ribosome.

One of the early assembly proteins it binds 23S rRNA. One of the proteins that surrounds the polypeptide exit tunnel on the outside of the ribosome. Forms the main docking site for trigger factor binding to the ribosome. The chain is Large ribosomal subunit protein uL23 from Dechloromonas aromatica (strain RCB).